Here is a 610-residue protein sequence, read N- to C-terminus: Threonine--tRNA ligase (610 aa).

The interval 1 to 29 (MANHDQQTVSSAAATTSASPSPVVLPKTS) is disordered. Over residues 8-24 (TVSSAAATTSASPSPVV) the composition is skewed to low complexity. Residues 209–502 (DHRRIGKDLD…MTENYAGDYP (294 aa)) form a catalytic region. Residues Cys302, His353, and His479 each contribute to the Zn(2+) site.

Belongs to the class-II aminoacyl-tRNA synthetase family. Homodimer. The cofactor is Zn(2+).

Its subcellular location is the cytoplasm. The catalysed reaction is tRNA(Thr) + L-threonine + ATP = L-threonyl-tRNA(Thr) + AMP + diphosphate + H(+). Its function is as follows. Catalyzes the attachment of threonine to tRNA(Thr) in a two-step reaction: L-threonine is first activated by ATP to form Thr-AMP and then transferred to the acceptor end of tRNA(Thr). Also edits incorrectly charged L-seryl-tRNA(Thr). The protein is Threonine--tRNA ligase of Synechococcus sp. (strain WH7803).